A 539-amino-acid chain; its full sequence is Chaperonin GroEL (539 aa).

ATP contacts are provided by residues 29-32 (TLGP), 86-90 (DGTTT), Gly-413, 476-478 (NAA), and Asp-492.

It belongs to the chaperonin (HSP60) family. In terms of assembly, forms a cylinder of 14 subunits composed of two heptameric rings stacked back-to-back. Interacts with the co-chaperonin GroES.

It localises to the cytoplasm. It carries out the reaction ATP + H2O + a folded polypeptide = ADP + phosphate + an unfolded polypeptide.. Together with its co-chaperonin GroES, plays an essential role in assisting protein folding. The GroEL-GroES system forms a nano-cage that allows encapsulation of the non-native substrate proteins and provides a physical environment optimized to promote and accelerate protein folding. This is Chaperonin GroEL from Streptococcus thermophilus (strain CNRZ 1066).